The chain runs to 323 residues: tRNA U34 carboxymethyltransferase (323 aa).

Residues K91, W105, K110, G130, 152-154 (DPT), 181-182 (IE), M196, Y200, and R315 contribute to the carboxy-S-adenosyl-L-methionine site.

Belongs to the class I-like SAM-binding methyltransferase superfamily. CmoB family. Homotetramer.

The catalysed reaction is carboxy-S-adenosyl-L-methionine + 5-hydroxyuridine(34) in tRNA = 5-carboxymethoxyuridine(34) in tRNA + S-adenosyl-L-homocysteine + H(+). Functionally, catalyzes carboxymethyl transfer from carboxy-S-adenosyl-L-methionine (Cx-SAM) to 5-hydroxyuridine (ho5U) to form 5-carboxymethoxyuridine (cmo5U) at position 34 in tRNAs. This is tRNA U34 carboxymethyltransferase from Salmonella gallinarum (strain 287/91 / NCTC 13346).